Reading from the N-terminus, the 131-residue chain is Small ribosomal subunit protein eS17A (131 aa).

It belongs to the eukaryotic ribosomal protein eS17 family. As to quaternary structure, component of the small ribosomal subunit (SSU). Mature yeast ribosomes consist of a small (40S) and a large (60S) subunit. The 40S small subunit contains 1 molecule of ribosomal RNA (18S rRNA) and at least 33 different proteins. The large 60S subunit contains 3 rRNA molecules (25S, 5.8S and 5S rRNA) and at least 46 different proteins.

It localises to the cytoplasm. Functionally, component of the ribosome, a large ribonucleoprotein complex responsible for the synthesis of proteins in the cell. The small ribosomal subunit (SSU) binds messenger RNAs (mRNAs) and translates the encoded message by selecting cognate aminoacyl-transfer RNA (tRNA) molecules. The large subunit (LSU) contains the ribosomal catalytic site termed the peptidyl transferase center (PTC), which catalyzes the formation of peptide bonds, thereby polymerizing the amino acids delivered by tRNAs into a polypeptide chain. The nascent polypeptides leave the ribosome through a tunnel in the LSU and interact with protein factors that function in enzymatic processing, targeting, and the membrane insertion of nascent chains at the exit of the ribosomal tunnel. This Schizosaccharomyces pombe (strain 972 / ATCC 24843) (Fission yeast) protein is Small ribosomal subunit protein eS17A (rps1701).